Here is a 64-residue protein sequence, read N- to C-terminus: Large ribosomal subunit protein uL29 (64 aa).

Belongs to the universal ribosomal protein uL29 family.

The polypeptide is Large ribosomal subunit protein uL29 (Burkholderia ambifaria (strain MC40-6)).